The following is a 45-amino-acid chain: Large ribosomal subunit protein bL34 (45 aa).

A disordered region spans residues methionine 1–alanine 45. The span at asparagine 10–alanine 27 shows a compositional bias: basic residues.

The protein belongs to the bacterial ribosomal protein bL34 family.

This chain is Large ribosomal subunit protein bL34, found in Micrococcus luteus (strain ATCC 4698 / DSM 20030 / JCM 1464 / CCM 169 / CCUG 5858 / IAM 1056 / NBRC 3333 / NCIMB 9278 / NCTC 2665 / VKM Ac-2230) (Micrococcus lysodeikticus).